A 431-amino-acid chain; its full sequence is Na(+)-translocating NADH-quinone reductase subunit F (431 aa).

A helical transmembrane segment spans residues 10–30; the sequence is IFIASTAFCALGLLLVAIILL. The 2Fe-2S ferredoxin-type domain occupies 41-133; that stretch reads CKLRINNDDS…DMNLEIEERY (93 aa). [2Fe-2S] cluster is bound by residues cysteine 76, cysteine 82, cysteine 85, and cysteine 117. In terms of domain architecture, FAD-binding FR-type spans 136–286; it reads ASSWEGTVVS…SGPYGESFMK (151 aa). The interval 289–413 is catalytic; sequence NRPVIFLIGG…ALHNSSILTL (125 aa).

Belongs to the NqrF family. In terms of assembly, composed of six subunits; NqrA, NqrB, NqrC, NqrD, NqrE and NqrF. It depends on [2Fe-2S] cluster as a cofactor. FAD is required as a cofactor.

The protein resides in the cell inner membrane. The enzyme catalyses a ubiquinone + n Na(+)(in) + NADH + H(+) = a ubiquinol + n Na(+)(out) + NAD(+). Functionally, NQR complex catalyzes the reduction of ubiquinone-1 to ubiquinol by two successive reactions, coupled with the transport of Na(+) ions from the cytoplasm to the periplasm. The first step is catalyzed by NqrF, which accepts electrons from NADH and reduces ubiquinone-1 to ubisemiquinone by a one-electron transfer pathway. The sequence is that of Na(+)-translocating NADH-quinone reductase subunit F from Chlamydia muridarum (strain MoPn / Nigg).